The following is a 34-amino-acid chain: uncharacterized protein (34 aa).

The disordered stretch occupies residues 1–34 (MRLRRLFKQPSTRVLGVTNCPRQQGHQKRREQPD). Positions 25-34 (GHQKRREQPD) are enriched in basic residues.

This is an uncharacterized protein from Schizosaccharomyces pombe (strain 972 / ATCC 24843) (Fission yeast).